The chain runs to 492 residues: Probable glycine dehydrogenase (decarboxylating) subunit 2 (492 aa).

K274 carries the N6-(pyridoxal phosphate)lysine modification.

This sequence belongs to the GcvP family. C-terminal subunit subfamily. The glycine cleavage system is composed of four proteins: P, T, L and H. In this organism, the P 'protein' is a heterodimer of two subunits. Pyridoxal 5'-phosphate is required as a cofactor.

The catalysed reaction is N(6)-[(R)-lipoyl]-L-lysyl-[glycine-cleavage complex H protein] + glycine + H(+) = N(6)-[(R)-S(8)-aminomethyldihydrolipoyl]-L-lysyl-[glycine-cleavage complex H protein] + CO2. Functionally, the glycine cleavage system catalyzes the degradation of glycine. The P protein binds the alpha-amino group of glycine through its pyridoxal phosphate cofactor; CO(2) is released and the remaining methylamine moiety is then transferred to the lipoamide cofactor of the H protein. The polypeptide is Probable glycine dehydrogenase (decarboxylating) subunit 2 (Exiguobacterium sibiricum (strain DSM 17290 / CCUG 55495 / CIP 109462 / JCM 13490 / 255-15)).